The chain runs to 534 residues: CTP synthase (534 aa).

Residues 1-268 (MSVKYIFVTG…AKIVCKRLGL (268 aa)) are amidoligase domain. Residue Ser-14 participates in CTP binding. Ser-14 is a binding site for UTP. 15–20 (GLGKGI) contacts ATP. Tyr-55 serves as a coordination point for L-glutamine. Asp-72 lines the ATP pocket. Mg(2+) is bound by residues Asp-72 and Glu-142. CTP is bound by residues 149-151 (DIE), 189-194 (KTKPTQ), and Lys-225. UTP contacts are provided by residues 189–194 (KTKPTQ) and Lys-225. The 242-residue stretch at 293-534 (TIGLVGKYVE…VRAAYEYKTK (242 aa)) folds into the Glutamine amidotransferase type-1 domain. Gly-355 contributes to the L-glutamine binding site. The active-site Nucleophile; for glutamine hydrolysis is Cys-382. L-glutamine contacts are provided by residues 383 to 386 (LGMQ), Glu-406, and Arg-462. Residues His-507 and Glu-509 contribute to the active site.

The protein belongs to the CTP synthase family. As to quaternary structure, homotetramer.

It carries out the reaction UTP + L-glutamine + ATP + H2O = CTP + L-glutamate + ADP + phosphate + 2 H(+). The enzyme catalyses L-glutamine + H2O = L-glutamate + NH4(+). The catalysed reaction is UTP + NH4(+) + ATP = CTP + ADP + phosphate + 2 H(+). Its pathway is pyrimidine metabolism; CTP biosynthesis via de novo pathway; CTP from UDP: step 2/2. Allosterically activated by GTP, when glutamine is the substrate; GTP has no effect on the reaction when ammonia is the substrate. The allosteric effector GTP functions by stabilizing the protein conformation that binds the tetrahedral intermediate(s) formed during glutamine hydrolysis. Inhibited by the product CTP, via allosteric rather than competitive inhibition. In terms of biological role, catalyzes the ATP-dependent amination of UTP to CTP with either L-glutamine or ammonia as the source of nitrogen. Regulates intracellular CTP levels through interactions with the four ribonucleotide triphosphates. The protein is CTP synthase of Ruminiclostridium cellulolyticum (strain ATCC 35319 / DSM 5812 / JCM 6584 / H10) (Clostridium cellulolyticum).